Here is a 350-residue protein sequence, read N- to C-terminus: N-acetyl-gamma-glutamyl-phosphate reductase (350 aa).

Cys154 is a catalytic residue.

Belongs to the NAGSA dehydrogenase family. Type 1 subfamily.

The protein localises to the cytoplasm. The enzyme catalyses N-acetyl-L-glutamate 5-semialdehyde + phosphate + NADP(+) = N-acetyl-L-glutamyl 5-phosphate + NADPH + H(+). Its pathway is amino-acid biosynthesis; L-arginine biosynthesis; N(2)-acetyl-L-ornithine from L-glutamate: step 3/4. In terms of biological role, catalyzes the NADPH-dependent reduction of N-acetyl-5-glutamyl phosphate to yield N-acetyl-L-glutamate 5-semialdehyde. The sequence is that of N-acetyl-gamma-glutamyl-phosphate reductase from Corynebacterium efficiens (strain DSM 44549 / YS-314 / AJ 12310 / JCM 11189 / NBRC 100395).